The sequence spans 244 residues: 5-oxoprolinase subunit A (244 aa).

The protein belongs to the LamB/PxpA family. Forms a complex composed of PxpA, PxpB and PxpC.

It catalyses the reaction 5-oxo-L-proline + ATP + 2 H2O = L-glutamate + ADP + phosphate + H(+). In terms of biological role, catalyzes the cleavage of 5-oxoproline to form L-glutamate coupled to the hydrolysis of ATP to ADP and inorganic phosphate. This is 5-oxoprolinase subunit A from Shigella flexneri serotype 5b (strain 8401).